The primary structure comprises 353 residues: Photosystem II protein D1 (353 aa).

Residue Thr2 is modified to N-acetylthreonine. Thr2 carries the phosphothreonine modification. 3 consecutive transmembrane segments (helical) span residues 29–46, 118–133, and 142–156; these read YIGWFGVLMIPTLLTATS, HFLLGVACYMGREWEL, and WIAVAYSAPVAAATA. His118 serves as a coordination point for chlorophyll a. A pheophytin a-binding site is contributed by Tyr126. [CaMn4O5] cluster-binding residues include Asp170 and Glu189. A helical transmembrane segment spans residues 197–218; the sequence is FHMLGVAGVFGGSLFSAMHGSL. His198 lines the chlorophyll a pocket. Residues His215 and 264 to 265 contribute to the a quinone site; that span reads SF. His215 is a Fe cation binding site. His272 contacts Fe cation. A helical transmembrane segment spans residues 274-288; it reads FLAAWPVVGIWFTAL. [CaMn4O5] cluster is bound by residues His332, Glu333, Asp342, and Ala344. Positions 345–353 are excised as a propeptide; it reads AVEAPAVNG.

Belongs to the reaction center PufL/M/PsbA/D family. As to quaternary structure, PSII is composed of 1 copy each of membrane proteins PsbA, PsbB, PsbC, PsbD, PsbE, PsbF, PsbH, PsbI, PsbJ, PsbK, PsbL, PsbM, PsbT, PsbX, PsbY, PsbZ, Psb30/Ycf12, at least 3 peripheral proteins of the oxygen-evolving complex and a large number of cofactors. It forms dimeric complexes. The D1/D2 heterodimer binds P680, chlorophylls that are the primary electron donor of PSII, and subsequent electron acceptors. It shares a non-heme iron and each subunit binds pheophytin, quinone, additional chlorophylls, carotenoids and lipids. D1 provides most of the ligands for the Mn4-Ca-O5 cluster of the oxygen-evolving complex (OEC). There is also a Cl(-1) ion associated with D1 and D2, which is required for oxygen evolution. The PSII complex binds additional chlorophylls, carotenoids and specific lipids. is required as a cofactor. In terms of processing, tyr-161 forms a radical intermediate that is referred to as redox-active TyrZ, YZ or Y-Z. Post-translationally, C-terminally processed by CTPA; processing is essential to allow assembly of the oxygen-evolving complex and thus photosynthetic growth.

The protein localises to the plastid. Its subcellular location is the chloroplast thylakoid membrane. The catalysed reaction is 2 a plastoquinone + 4 hnu + 2 H2O = 2 a plastoquinol + O2. Photosystem II (PSII) is a light-driven water:plastoquinone oxidoreductase that uses light energy to abstract electrons from H(2)O, generating O(2) and a proton gradient subsequently used for ATP formation. It consists of a core antenna complex that captures photons, and an electron transfer chain that converts photonic excitation into a charge separation. The D1/D2 (PsbA/PsbD) reaction center heterodimer binds P680, the primary electron donor of PSII as well as several subsequent electron acceptors. This chain is Photosystem II protein D1, found in Marchantia polymorpha (Common liverwort).